The sequence spans 268 residues: Ubiquinone/menaquinone biosynthesis C-methyltransferase UbiE (268 aa).

Positions 1–23 (MTDQHAFATEQVQLDPTLSPTTE) are disordered. Polar residues predominate over residues 10–23 (EQVQLDPTLSPTTE). S-adenosyl-L-methionine contacts are provided by residues Thr91, Asp112, 140 to 141 (NA), and Ser157.

This sequence belongs to the class I-like SAM-binding methyltransferase superfamily. MenG/UbiE family.

It catalyses the reaction a 2-demethylmenaquinol + S-adenosyl-L-methionine = a menaquinol + S-adenosyl-L-homocysteine + H(+). It carries out the reaction a 2-methoxy-6-(all-trans-polyprenyl)benzene-1,4-diol + S-adenosyl-L-methionine = a 5-methoxy-2-methyl-3-(all-trans-polyprenyl)benzene-1,4-diol + S-adenosyl-L-homocysteine + H(+). It functions in the pathway quinol/quinone metabolism; menaquinone biosynthesis; menaquinol from 1,4-dihydroxy-2-naphthoate: step 2/2. The protein operates within cofactor biosynthesis; ubiquinone biosynthesis. In terms of biological role, methyltransferase required for the conversion of demethylmenaquinol (DMKH2) to menaquinol (MKH2) and the conversion of 2-polyprenyl-6-methoxy-1,4-benzoquinol (DDMQH2) to 2-polyprenyl-3-methyl-6-methoxy-1,4-benzoquinol (DMQH2). This chain is Ubiquinone/menaquinone biosynthesis C-methyltransferase UbiE, found in Pasteurella multocida (strain Pm70).